A 104-amino-acid polypeptide reads, in one-letter code: Guanyl-specific ribonuclease Ap1 (104 aa).

2 disulfide bridges follow: Cys2-Cys10 and Cys6-Cys103. Residue His40 is part of the active site. The Proton acceptor role is filled by Glu58. The Proton donor role is filled by His92.

The protein belongs to the ribonuclease N1/T1 family.

The protein localises to the secreted. It catalyses the reaction [RNA] containing guanosine + H2O = an [RNA fragment]-3'-guanosine-3'-phosphate + a 5'-hydroxy-ribonucleotide-3'-[RNA fragment].. The sequence is that of Guanyl-specific ribonuclease Ap1 from Aspergillus pallidus.